Here is a 179-residue protein sequence, read N- to C-terminus: ADP-ribosylation factor-like protein 5A (179 aa).

G2 is lipidated: N-myristoyl glycine. GTP is bound by residues 23–30, 66–70, 125–128, and A159; these read GLDNAGKT, DIGGQ, and NKQD.

The protein belongs to the small GTPase superfamily. Arf family.

Lacks ADP-ribosylation enhancing activity. The protein is ADP-ribosylation factor-like protein 5A (Arl5a) of Mus musculus (Mouse).